Reading from the N-terminus, the 103-residue chain is Sec-independent protein translocase protein TatA (103 aa).

A helical membrane pass occupies residues 1 to 21 (MGNIFSPTHLIIILLLILLLF). A disordered region spans residues 48-103 (EESIEDKVEMADTSQVINEESQQSQPLSVKRAAIRRKASSDSKGGKASIAKKQRVK). Residues 59–74 (DTSQVINEESQQSQPL) are compositionally biased toward polar residues.

This sequence belongs to the TatA/E family. In terms of assembly, the Tat system comprises two distinct complexes: a TatABC complex, containing multiple copies of TatA, TatB and TatC subunits, and a separate TatA complex, containing only TatA subunits. Substrates initially bind to the TatABC complex, which probably triggers association of the separate TatA complex to form the active translocon.

Its subcellular location is the cell inner membrane. Its function is as follows. Part of the twin-arginine translocation (Tat) system that transports large folded proteins containing a characteristic twin-arginine motif in their signal peptide across membranes. TatA could form the protein-conducting channel of the Tat system. In Bartonella tribocorum (strain CIP 105476 / IBS 506), this protein is Sec-independent protein translocase protein TatA.